The chain runs to 202 residues: Small ribosomal subunit protein uS4 (202 aa).

Residues 91-168 (SRLSSILYNS…HKVPDYLEVD (78 aa)) form the S4 RNA-binding domain.

The protein belongs to the universal ribosomal protein uS4 family. Part of the 30S ribosomal subunit. Contacts protein S5. The interaction surface between S4 and S5 is involved in control of translational fidelity.

Functionally, one of the primary rRNA binding proteins, it binds directly to 16S rRNA where it nucleates assembly of the body of the 30S subunit. In terms of biological role, with S5 and S12 plays an important role in translational accuracy. This chain is Small ribosomal subunit protein uS4, found in Ehrlichia canis (strain Jake).